Consider the following 348-residue polypeptide: Protein RecA (348 aa).

Position 66–73 (66–73 (GPESSGKT)) interacts with ATP.

This sequence belongs to the RecA family.

The protein resides in the cytoplasm. Its function is as follows. Can catalyze the hydrolysis of ATP in the presence of single-stranded DNA, the ATP-dependent uptake of single-stranded DNA by duplex DNA, and the ATP-dependent hybridization of homologous single-stranded DNAs. It interacts with LexA causing its activation and leading to its autocatalytic cleavage. The polypeptide is Protein RecA (Neisseria meningitidis serogroup C / serotype 2a (strain ATCC 700532 / DSM 15464 / FAM18)).